Reading from the N-terminus, the 198-residue chain is NAD(P)H dehydrogenase (quinone) (198 aa).

In terms of domain architecture, Flavodoxin-like spans 4 to 189; the sequence is VLVLYYSMYG…ALARYQGRHV (186 aa). Residues 10 to 15 and 78 to 80 contribute to the FMN site; these read SMYGHV and TRF. Tyr12 contacts NAD(+). Trp98 is a substrate binding site. FMN is bound by residues 113 to 118 and His133; that span reads STGTGG.

It belongs to the WrbA family. It depends on FMN as a cofactor.

The enzyme catalyses a quinone + NADH + H(+) = a quinol + NAD(+). It catalyses the reaction a quinone + NADPH + H(+) = a quinol + NADP(+). This is NAD(P)H dehydrogenase (quinone) from Halorhodospira halophila (strain DSM 244 / SL1) (Ectothiorhodospira halophila (strain DSM 244 / SL1)).